Consider the following 158-residue polypeptide: Biotin carboxyl carrier protein of acetyl-CoA carboxylase (158 aa).

A Biotinyl-binding domain is found at 81–157 (YATIVSPMVG…DCGQALMKVE (77 aa)). The residue at position 123 (Lys123) is an N6-biotinyllysine.

It localises to the plastid. Its subcellular location is the chloroplast. The protein operates within lipid metabolism; fatty acid biosynthesis. Its function is as follows. This protein is a component of the acetyl coenzyme A carboxylase complex; first, biotin carboxylase catalyzes the carboxylation of the carrier protein and then the transcarboxylase transfers the carboxyl group to form malonyl-CoA. This Pyropia yezoensis (Susabi-nori) protein is Biotin carboxyl carrier protein of acetyl-CoA carboxylase (accB).